Here is an 867-residue protein sequence, read N- to C-terminus: Mitochondrial escape protein 2 (867 aa).

2 disordered regions span residues 1 to 20 and 44 to 66; these read MISA…RGPR and RTTR…KESG. Residues 1–41 constitute a mitochondrion transit peptide; it reads MISAHILSRQATRPGHRGPRFTTHSTALLVQRSLGQGLPLA. Residues 42-308 are Mitochondrial matrix-facing; it reads HRRTTRAWES…IWAWFTSHPR (267 aa). Residues 48-59 are compositionally biased toward low complexity; sequence AWESTSSSTAST. Residues 203 to 293 enclose the RRM domain; the sequence is SRIRVEFVAA…TKLRLSYEQR (91 aa). The chain crosses the membrane as a helical span at residues 309-329; sequence IVIPLVAALIAAFTVAVFDPI. At 330-867 the chain is on the mitochondrial intermembrane side; the sequence is REFFVKAHVQ…GVVKGQMVKG (538 aa). Residues 614–639 show a composition bias toward basic and acidic residues; it reads FAHDGQQKDSESGDQDNDNKNQKKDS. A disordered region spans residues 614–647; sequence FAHDGQQKDSESGDQDNDNKNQKKDSNTPAPLDP. Residues 797 to 857 are a coiled coil; sequence LLVLTELAKM…ARLKGLEKEM (61 aa).

This sequence belongs to the YME2 family.

Its subcellular location is the mitochondrion inner membrane. Its function is as follows. Plays a role in maintaining the mitochondrial genome and in controlling the mtDNA escape. Involved in the regulation of mtDNA nucleotide structure and number. May have a dispensable role in early maturation of pre-rRNA. The polypeptide is Mitochondrial escape protein 2 (msp-45) (Neurospora crassa (strain ATCC 24698 / 74-OR23-1A / CBS 708.71 / DSM 1257 / FGSC 987)).